The sequence spans 508 residues: Photosystem II CP47 reaction center protein (508 aa).

6 helical membrane passes run 21–36 (SVHI…WAGS), 101–115 (IVFS…IWHW), 140–156 (GIHL…FGAF), 203–218 (IAAG…FHLS), 237–252 (VLSS…AFVV), and 457–472 (SFAL…HGAR).

This sequence belongs to the PsbB/PsbC family. PsbB subfamily. As to quaternary structure, PSII is composed of 1 copy each of membrane proteins PsbA, PsbB, PsbC, PsbD, PsbE, PsbF, PsbH, PsbI, PsbJ, PsbK, PsbL, PsbM, PsbT, PsbX, PsbY, PsbZ, Psb30/Ycf12, at least 3 peripheral proteins of the oxygen-evolving complex and a large number of cofactors. It forms dimeric complexes. Binds multiple chlorophylls. PSII binds additional chlorophylls, carotenoids and specific lipids. serves as cofactor.

The protein localises to the plastid. Its subcellular location is the chloroplast thylakoid membrane. Its function is as follows. One of the components of the core complex of photosystem II (PSII). It binds chlorophyll and helps catalyze the primary light-induced photochemical processes of PSII. PSII is a light-driven water:plastoquinone oxidoreductase, using light energy to abstract electrons from H(2)O, generating O(2) and a proton gradient subsequently used for ATP formation. The chain is Photosystem II CP47 reaction center protein from Barbarea verna (Land cress).